Consider the following 336-residue polypeptide: USG-1 protein homolog (336 aa).

The protein belongs to the aspartate-semialdehyde dehydrogenase family.

This Azotobacter vinelandii protein is USG-1 protein homolog (usg).